Here is a 132-residue protein sequence, read N- to C-terminus: Small ribosomal subunit protein uS8 (132 aa).

The protein belongs to the universal ribosomal protein uS8 family. As to quaternary structure, part of the 30S ribosomal subunit. Contacts proteins S5 and S12.

One of the primary rRNA binding proteins, it binds directly to 16S rRNA central domain where it helps coordinate assembly of the platform of the 30S subunit. In Nitrobacter hamburgensis (strain DSM 10229 / NCIMB 13809 / X14), this protein is Small ribosomal subunit protein uS8.